The sequence spans 307 residues: Mycothiol acetyltransferase (307 aa).

N-acetyltransferase domains lie at 12-152 (TRTD…APIP) and 160-307 (VTLR…YQRS). A 1D-myo-inositol 2-(L-cysteinylamino)-2-deoxy-alpha-D-glucopyranoside-binding site is contributed by E43. An acetyl-CoA-binding site is contributed by 87 to 89 (LAV). 1D-myo-inositol 2-(L-cysteinylamino)-2-deoxy-alpha-D-glucopyranoside is bound by residues E187, K227, and E239. Residues 243–245 (LGV) and 250–256 (HGGGLGK) each bind acetyl-CoA. A 1D-myo-inositol 2-(L-cysteinylamino)-2-deoxy-alpha-D-glucopyranoside-binding site is contributed by Y278.

This sequence belongs to the acetyltransferase family. MshD subfamily. As to quaternary structure, monomer.

It carries out the reaction 1D-myo-inositol 2-(L-cysteinylamino)-2-deoxy-alpha-D-glucopyranoside + acetyl-CoA = mycothiol + CoA + H(+). Functionally, catalyzes the transfer of acetyl from acetyl-CoA to desacetylmycothiol (Cys-GlcN-Ins) to form mycothiol. The chain is Mycothiol acetyltransferase from Salinispora arenicola (strain CNS-205).